The sequence spans 74 residues: Sec-independent protein translocase protein TatA (74 aa).

A helical transmembrane segment spans residues 1 to 21 (MGTFSIWHWLIVLLVVVVVFG). The tract at residues 50-74 (TAPAGQVANQSTADQTIDVQTKPKG) is disordered. A compositionally biased stretch (polar residues) spans 56 to 68 (VANQSTADQTIDV).

It belongs to the TatA/E family. In terms of assembly, the Tat system comprises two distinct complexes: a TatABC complex, containing multiple copies of TatA, TatB and TatC subunits, and a separate TatA complex, containing only TatA subunits. Substrates initially bind to the TatABC complex, which probably triggers association of the separate TatA complex to form the active translocon.

The protein localises to the cell inner membrane. Part of the twin-arginine translocation (Tat) system that transports large folded proteins containing a characteristic twin-arginine motif in their signal peptide across membranes. TatA could form the protein-conducting channel of the Tat system. This Verminephrobacter eiseniae (strain EF01-2) protein is Sec-independent protein translocase protein TatA.